The primary structure comprises 238 residues: EKC/KEOPS complex subunit SPAP27G11.07c (238 aa).

In terms of domain architecture, Protein kinase spans 20–238; the sequence is EKKLTVVKQG…MRGRKRTMIG (219 aa). Residues 26-34 and K48 each bind ATP; that span reads VKQGAEAIT. D148 serves as the catalytic Proton acceptor.

Belongs to the protein kinase superfamily. BUD32 family. Component of the EKC/KEOPS complex composed of at least SPAP27G11.07c/BUD32, cgi121, gon7, pgp2 and SPAC4H3.13/PCC1; the whole complex dimerizes.

The protein localises to the cytoplasm. It is found in the nucleus. Its subcellular location is the chromosome. The protein resides in the telomere. The enzyme catalyses L-seryl-[protein] + ATP = O-phospho-L-seryl-[protein] + ADP + H(+). It carries out the reaction L-threonyl-[protein] + ATP = O-phospho-L-threonyl-[protein] + ADP + H(+). Its function is as follows. Component of the EKC/KEOPS complex that is required for the formation of a threonylcarbamoyl group on adenosine at position 37 (t(6)A37) in tRNAs that read codons beginning with adenine. The complex is probably involved in the transfer of the threonylcarbamoyl moiety of threonylcarbamoyl-AMP (TC-AMP) to the N6 group of A37. BUD32 has ATPase activity in the context of the EKC/KEOPS complex and likely plays a supporting role to the catalytic subunit KAE1. The EKC/KEOPS complex also promotes both telomere uncapping and telomere elongation. The complex is required for efficient recruitment of transcriptional coactivators. The sequence is that of EKC/KEOPS complex subunit SPAP27G11.07c from Schizosaccharomyces pombe (strain 972 / ATCC 24843) (Fission yeast).